The following is a 353-amino-acid chain: MLYWLSEILHINILGYITIRAGIAFFLALFFTLFLMPRFIRWAQSTSSHQPINEWAPQRHQGKAKTPTMGGIVFIFATILASLISIKFSNLYAVGAVLTLIFFSIIGFKDDIAKIKKNENLAGLKAKTKLILQTTFALIISIFLYTLSDFNTSLYVPFLKNPLFDMGIFAIFFWVIVIIATSNAVNLTDGLDGLATVPSITALASFSIIIYITGNVTMSSYLLMPNINIGEVAIVSSALIGALSGFLWYNCHPAEVFMGDSGSLTIGAFLGYLAIISKSEILLLLIGSIFVIETLSVILQVGSYKLRKKRVFLMAPIHHHFEMKNWAENKIIVRFWIIATLSNVIALITLKIR.

10 consecutive transmembrane segments (helical) span residues 13–33 (ILGY…FFTL), 66–86 (TPTM…LISI), 88–108 (FSNL…IIGF), 130–150 (LILQ…LSDF), 162–182 (PLFD…IATS), 193–213 (GLAT…IYIT), 229–249 (IGEV…FLWY), 256–276 (VFMG…LAII), 281–301 (ILLL…ILQV), and 330–350 (KIIV…LITL).

The protein belongs to the glycosyltransferase 4 family. MraY subfamily. Mg(2+) is required as a cofactor.

It localises to the cell inner membrane. It catalyses the reaction UDP-N-acetyl-alpha-D-muramoyl-L-alanyl-gamma-D-glutamyl-meso-2,6-diaminopimeloyl-D-alanyl-D-alanine + di-trans,octa-cis-undecaprenyl phosphate = di-trans,octa-cis-undecaprenyl diphospho-N-acetyl-alpha-D-muramoyl-L-alanyl-D-glutamyl-meso-2,6-diaminopimeloyl-D-alanyl-D-alanine + UMP. Its pathway is cell wall biogenesis; peptidoglycan biosynthesis. Functionally, catalyzes the initial step of the lipid cycle reactions in the biosynthesis of the cell wall peptidoglycan: transfers peptidoglycan precursor phospho-MurNAc-pentapeptide from UDP-MurNAc-pentapeptide onto the lipid carrier undecaprenyl phosphate, yielding undecaprenyl-pyrophosphoryl-MurNAc-pentapeptide, known as lipid I. This chain is Phospho-N-acetylmuramoyl-pentapeptide-transferase, found in Sulfurimonas denitrificans (strain ATCC 33889 / DSM 1251) (Thiomicrospira denitrificans (strain ATCC 33889 / DSM 1251)).